Reading from the N-terminus, the 373-residue chain is DNA replication and repair protein RecF (373 aa).

30–37 (GDNAQGKT) provides a ligand contact to ATP.

This sequence belongs to the RecF family.

It is found in the cytoplasm. Functionally, the RecF protein is involved in DNA metabolism; it is required for DNA replication and normal SOS inducibility. RecF binds preferentially to single-stranded, linear DNA. It also seems to bind ATP. The protein is DNA replication and repair protein RecF of Oenococcus oeni (strain ATCC BAA-331 / PSU-1).